The following is a 406-amino-acid chain: Glutamyl-tRNA(Gln) amidotransferase subunit D (406 aa).

Positions Lys-68–Asn-390 constitute an Asparaginase/glutaminase domain. Catalysis depends on residues Thr-78, Thr-152, Asp-153, and Lys-230.

Belongs to the asparaginase 1 family. GatD subfamily. Heterodimer of GatD and GatE.

The catalysed reaction is L-glutamyl-tRNA(Gln) + L-glutamine + ATP + H2O = L-glutaminyl-tRNA(Gln) + L-glutamate + ADP + phosphate + H(+). In terms of biological role, allows the formation of correctly charged Gln-tRNA(Gln) through the transamidation of misacylated Glu-tRNA(Gln) in organisms which lack glutaminyl-tRNA synthetase. The reaction takes place in the presence of glutamine and ATP through an activated gamma-phospho-Glu-tRNA(Gln). The GatDE system is specific for glutamate and does not act on aspartate. In Thermoplasma volcanium (strain ATCC 51530 / DSM 4299 / JCM 9571 / NBRC 15438 / GSS1), this protein is Glutamyl-tRNA(Gln) amidotransferase subunit D.